The chain runs to 63 residues: Large ribosomal subunit protein uL29 (63 aa).

It belongs to the universal ribosomal protein uL29 family.

The sequence is that of Large ribosomal subunit protein uL29 from Glaesserella parasuis serovar 5 (strain SH0165) (Haemophilus parasuis).